The chain runs to 436 residues: NADH-quinone oxidoreductase subunit D 1 (436 aa).

Belongs to the complex I 49 kDa subunit family. NDH-1 is composed of 14 different subunits. Subunits NuoB, C, D, E, F, and G constitute the peripheral sector of the complex.

It localises to the cell inner membrane. The enzyme catalyses a quinone + NADH + 5 H(+)(in) = a quinol + NAD(+) + 4 H(+)(out). Functionally, NDH-1 shuttles electrons from NADH, via FMN and iron-sulfur (Fe-S) centers, to quinones in the respiratory chain. The immediate electron acceptor for the enzyme in this species is believed to be ubiquinone. Couples the redox reaction to proton translocation (for every two electrons transferred, four hydrogen ions are translocated across the cytoplasmic membrane), and thus conserves the redox energy in a proton gradient. This Stenotrophomonas maltophilia (strain R551-3) protein is NADH-quinone oxidoreductase subunit D 1.